Reading from the N-terminus, the 333-residue chain is Uroporphyrinogen decarboxylase (333 aa).

Substrate is bound by residues 21–25 (RQVGR), D70, Y139, S194, and H309.

Belongs to the uroporphyrinogen decarboxylase family. Homodimer.

The protein localises to the cytoplasm. The catalysed reaction is uroporphyrinogen III + 4 H(+) = coproporphyrinogen III + 4 CO2. The protein operates within porphyrin-containing compound metabolism; protoporphyrin-IX biosynthesis; coproporphyrinogen-III from 5-aminolevulinate: step 4/4. In terms of biological role, catalyzes the decarboxylation of four acetate groups of uroporphyrinogen-III to yield coproporphyrinogen-III. The sequence is that of Uroporphyrinogen decarboxylase from Chlamydia abortus (strain DSM 27085 / S26/3) (Chlamydophila abortus).